The following is a 413-amino-acid chain: MGDDRPFVCSAPGCGQRFTNEDHLAVHKHKHEMTLKFGPARTDSVIIADQTPTPTRFLKNCEEVGLFNELASSFEHEFKKASDDDEKKGAAGPLDMSLPSTPDIKIKEEEPVEVDSSPPDSPASSPCSPPLKEKEVTTKPVVISTPTPTIVRPGSLPLHLGYDPLHPTLPSPTSVITQAPPSNRQIGSPTGSLPLVMHLANGQTMPMLPGPPVQMPSVISLARPVSMVPNIPGIPGPPVNNSGSISPSGHPMPSEAKMRLKATLTHQVSSINGGCGMVVGTASTMVTARPEQNQILIQHPDAPSPAQPQVSPAQPTPSTGGRRRRTVDEDPDERRQRFLERNRAAASRCRQKRKLWVSSLEKKAEELTSQNIQLSNEVTLLRNEVAQLKQLLLAHKDCPVTALQKKTQGYLGK.

Positions 1 to 285 (MGDDRPFVCS…GMVVGTASTM (285 aa)) are transactivation domain. The C2H2-type zinc finger occupies 7-31 (FVCSAPGCGQRFTNEDHLAVHKHKH). Threonine 51 carries the phosphothreonine; by MAPK11 modification. 2 positions are modified to phosphothreonine: threonine 53 and threonine 101. Disordered stretches follow at residues 81–140 (ASDD…TTKP) and 299–337 (HPDAPSPAQPQVSPAQPTPSTGGRRRRTVDEDPDERRQR). Residue lysine 107 forms a Glycyl lysine isopeptide (Lys-Gly) (interchain with G-Cter in SUMO1) linkage. Composition is skewed to low complexity over residues 114–126 (VDSSPPDSPASSP) and 307–320 (QPQVSPAQPTPSTG). Residues 326 to 337 (TVDEDPDERRQR) are compositionally biased toward basic and acidic residues. One can recognise a bZIP domain in the interval 332–395 (DERRQRFLER…AQLKQLLLAH (64 aa)). Residues 334-354 (RRQRFLERNRAAASRCRQKRK) form a basic motif region. Residues 360–388 (LEKKAEELTSQNIQLSNEVTLLRNEVAQL) are leucine-zipper.

The protein belongs to the bZIP family. As to quaternary structure, homodimer; binds DNA as homodimer. Heterodimer; heterodimerizes with other members of ATF family and with JUN family members. Interacts with JNK2; the interaction does not phosphorylate ATF7 but acts as a docking site for other ATF-associated partners such as JUN family members. Interacts (via its transactivation domain) with TAF12 the interaction potentiates the transactivation activity and is inhibited by ATF7 sumoylation. Interacts with TAF4; the interaction inhibits the TAF12-dependent transactivation. Interacts with MAPK9; the interaction does not phosphorylate ATF7 but acts as a docking site for ATF7-associated partners such as JUN. Interacts with Ku complex components XRCC6 and XRCC7. Interacts with TERT. On EGF stimulation, phosphorylated first on Thr-53 allowing subsequent phosphorylation on Thr-51. This latter phosphorylation prevents sumoylation, increases binding to TAF12 and enhances transcriptional activity. Social isolation stress as well as TNF-alpha also induce the phosphorylation of ATF7. Phosphorylated in proliferating colonic and small intestinal epithelial cells. In terms of processing, sumoylation delays nuclear localization and inhibits transactivation activity through preventing binding to TAF12. RANBP2 appears to be the specific E3 ligase.

The protein resides in the nucleus. Its subcellular location is the nucleoplasm. The protein localises to the chromosome. It localises to the telomere. Its function is as follows. Stress-responsive chromatin regulator that plays a role in various biological processes including innate immunological memory, adipocyte differentiation or telomerase regulation. In absence of stress, contributes to the formation of heterochromatin and heterochromatin-like structure by recruiting histone H3K9 tri- and di-methyltransferases thus silencing the transcription of target genes such as Htr5b, STAT1 in adipocytes, or genes involved in innate immunity in macrophages and adipocytes. Phosphorylation of ATF7 disrupts interactions with histone methyltransferase and enhances the association with coactivators containing histone acetyltransferase and/or histone demethylase, leading to disruption of the heterochromatin-like structure and subsequently transcriptional activation. In response to TNF-alpha, which is induced by various stresses, phosphorylated ATF7 and telomerase are released from telomeres leading to telomere shortening. Also plays a role in maintaining epithelial regenerative capacity and protecting against cell death during intestinal epithelial damage and repair. The polypeptide is Cyclic AMP-dependent transcription factor ATF-7 (Atf7) (Mus musculus (Mouse)).